A 314-amino-acid chain; its full sequence is Malate dehydrogenase (314 aa).

NAD(+) contacts are provided by residues 11-16 and Asp35; that span reads GSGNIG. Arg84 and Arg90 together coordinate substrate. Residues Asn97 and 120–122 contribute to the NAD(+) site; that span reads ITN. Substrate-binding residues include Asn122 and Arg153. His177 functions as the Proton acceptor in the catalytic mechanism.

Belongs to the LDH/MDH superfamily. MDH type 3 family.

It carries out the reaction (S)-malate + NAD(+) = oxaloacetate + NADH + H(+). Catalyzes the reversible oxidation of malate to oxaloacetate. The polypeptide is Malate dehydrogenase (Rickettsia bellii (strain RML369-C)).